We begin with the raw amino-acid sequence, 491 residues long: Putative mannan endo-1,4-beta-mannosidase 5 (491 aa).

An N-terminal signal peptide occupies residues 1–31 (METSYREEEARRKASLLHCIFFFLLGALAMA). Positions 134 and 248 each coordinate substrate. Glutamate 249 (proton donor) is an active-site residue. Tyrosine 330 is a binding site for substrate. The active-site Nucleophile is the glutamate 372. Asparagine 385 carries N-linked (GlcNAc...) asparagine glycosylation. Residue tryptophan 416 participates in substrate binding. N-linked (GlcNAc...) asparagine glycosylation occurs at asparagine 471.

It belongs to the glycosyl hydrolase 5 (cellulase A) family. As to expression, expression not detected.

The protein localises to the secreted. The enzyme catalyses Random hydrolysis of (1-&gt;4)-beta-D-mannosidic linkages in mannans, galactomannans and glucomannans.. In Oryza sativa subsp. japonica (Rice), this protein is Putative mannan endo-1,4-beta-mannosidase 5 (MAN5).